Consider the following 726-residue polypeptide: Catalase-peroxidase (726 aa).

Positions 1-33 are disordered; it reads MSTTDDTHNTLSTGKCPFHQGGHDRSAGAGTAS. A cross-link (tryptophyl-tyrosyl-methioninium (Trp-Tyr) (with M-252)) is located at residues 105–226; that stretch reads WHGAGTYRSI…LGATEMGLIY (122 aa). Histidine 106 (proton acceptor) is an active-site residue. Positions 226-252 form a cross-link, tryptophyl-tyrosyl-methioninium (Tyr-Met) (with W-105); sequence YVNPEGPDHSGEPLSAAAAIRATFGNM. Histidine 267 is a heme b binding site.

This sequence belongs to the peroxidase family. Peroxidase/catalase subfamily. In terms of assembly, homodimer or homotetramer. It depends on heme b as a cofactor. Post-translationally, formation of the three residue Trp-Tyr-Met cross-link is important for the catalase, but not the peroxidase activity of the enzyme.

The catalysed reaction is H2O2 + AH2 = A + 2 H2O. It carries out the reaction 2 H2O2 = O2 + 2 H2O. In terms of biological role, bifunctional enzyme with both catalase and broad-spectrum peroxidase activity. This is Catalase-peroxidase from Salmonella schwarzengrund (strain CVM19633).